Reading from the N-terminus, the 208-residue chain is Large ribosomal subunit protein uL3 (208 aa).

Gln150 carries the post-translational modification N5-methylglutamine.

It belongs to the universal ribosomal protein uL3 family. In terms of assembly, part of the 50S ribosomal subunit. Forms a cluster with proteins L14 and L19. Methylated by PrmB.

One of the primary rRNA binding proteins, it binds directly near the 3'-end of the 23S rRNA, where it nucleates assembly of the 50S subunit. This chain is Large ribosomal subunit protein uL3, found in Buchnera aphidicola subsp. Cinara cedri (strain Cc).